A 276-amino-acid chain; its full sequence is N-acetylmuramoyl-L-alanine amidase AmiD (276 aa).

An N-terminal signal peptide occupies residues 1–16 (MRRFFWLVAAALLLAG). A lipid anchor (N-palmitoyl cysteine) is attached at C17. A lipid anchor (S-diacylglycerol cysteine) is attached at C17. In terms of domain architecture, N-acetylmuramoyl-L-alanine amidase spans 42–179 (PRIKVLVIHY…APQRKDDPGP (138 aa)). Residue H50 coordinates Zn(2+). 51–52 (YT) contacts substrate. E119 acts as the Proton acceptor in catalysis. Positions 166 and 176 each coordinate Zn(2+).

The protein belongs to the N-acetylmuramoyl-L-alanine amidase 2 family. Zn(2+) serves as cofactor.

The protein localises to the cell outer membrane. The catalysed reaction is Hydrolyzes the link between N-acetylmuramoyl residues and L-amino acid residues in certain cell-wall glycopeptides.. In Escherichia coli (strain K12), this protein is N-acetylmuramoyl-L-alanine amidase AmiD (amiD).